Here is a 234-residue protein sequence, read N- to C-terminus: Purine nucleoside phosphorylase DeoD-type (234 aa).

H4 is an a purine D-ribonucleoside binding site. Phosphate contacts are provided by residues G20, R24, R43, and 87-90 (RVGT). A purine D-ribonucleoside contacts are provided by residues 179–181 (EME) and 203–204 (SN).

Belongs to the PNP/UDP phosphorylase family. Homohexamer; trimer of homodimers.

The enzyme catalyses a purine D-ribonucleoside + phosphate = a purine nucleobase + alpha-D-ribose 1-phosphate. It catalyses the reaction a purine 2'-deoxy-D-ribonucleoside + phosphate = a purine nucleobase + 2-deoxy-alpha-D-ribose 1-phosphate. Functionally, catalyzes the reversible phosphorolytic breakdown of the N-glycosidic bond in the beta-(deoxy)ribonucleoside molecules, with the formation of the corresponding free purine bases and pentose-1-phosphate. The chain is Purine nucleoside phosphorylase DeoD-type from Latilactobacillus sakei subsp. sakei (strain 23K) (Lactobacillus sakei subsp. sakei).